The sequence spans 712 residues: DNA ligase (712 aa).

The segment at 1–22 is disordered; it reads MVQKNEHQGGQSQHSLFAAGPT. Residues 53-57 and aspartate 138 contribute to the NAD(+) site; that span reads DDQFD. Lysine 140 (N6-AMP-lysine intermediate) is an active-site residue. NAD(+) contacts are provided by arginine 161, glutamate 199, lysine 318, and lysine 342. Zn(2+) is bound by residues cysteine 436, cysteine 439, cysteine 454, and cysteine 459. Residues 612 to 631 form a disordered region; it reads RGGRSGGGSSGSTGEGGLAS. Gly residues predominate over residues 614–630; it reads GRSGGGSSGSTGEGGLA. The BRCT domain occupies 629–712; sequence LASGPLAGKN…MLREAKAASE (84 aa).

This sequence belongs to the NAD-dependent DNA ligase family. LigA subfamily. Mg(2+) is required as a cofactor. It depends on Mn(2+) as a cofactor.

The catalysed reaction is NAD(+) + (deoxyribonucleotide)n-3'-hydroxyl + 5'-phospho-(deoxyribonucleotide)m = (deoxyribonucleotide)n+m + AMP + beta-nicotinamide D-nucleotide.. In terms of biological role, DNA ligase that catalyzes the formation of phosphodiester linkages between 5'-phosphoryl and 3'-hydroxyl groups in double-stranded DNA using NAD as a coenzyme and as the energy source for the reaction. It is essential for DNA replication and repair of damaged DNA. In Desulfovibrio desulfuricans (strain ATCC 27774 / DSM 6949 / MB), this protein is DNA ligase.